We begin with the raw amino-acid sequence, 478 residues long: Pyruvate kinase (478 aa).

Arg36 serves as a coordination point for substrate. Asn38, Ser40, and Asp70 together coordinate K(+). Residue 38–41 (NFSH) participates in ATP binding. The ATP site is built by Arg77 and Lys160. Residue Glu225 participates in Mg(2+) binding. Residues Gly251, Asp252, and Thr284 each coordinate substrate. Residue Asp252 coordinates Mg(2+).

Belongs to the pyruvate kinase family. As to quaternary structure, homotetramer. Mg(2+) serves as cofactor. It depends on K(+) as a cofactor.

It catalyses the reaction pyruvate + ATP = phosphoenolpyruvate + ADP + H(+). The protein operates within carbohydrate degradation; glycolysis; pyruvate from D-glyceraldehyde 3-phosphate: step 5/5. Allosterically activated by AMP and by several sugar phosphates. Belongs to type II PK. The chain is Pyruvate kinase (pykA) from Haemophilus influenzae (strain ATCC 51907 / DSM 11121 / KW20 / Rd).